Consider the following 46-residue polypeptide: Antimicrobial peptide eNAP-2 (46 aa).

A WAP domain is found at 12 to 46; sequence RPGRCPTVPPGTFGHCACLCTGDASEPKGQKCCSN.

In terms of biological role, has antibiotic activity against several equine uterine pathogens; S.zooepidemicus, E.coli and P.aeruginosa. Highly efficient against S.zoopedemicus. Not active against K.pneumoniae. Selectively inactivates microbial serine proteases (subtilisin A and proteinase K) without inhibiting mammalian serine proteases (human neutrophil elastase, human cathepsin G and bovine pancreatic trypsin). The polypeptide is Antimicrobial peptide eNAP-2 (Equus caballus (Horse)).